Here is a 196-residue protein sequence, read N- to C-terminus: uncharacterized protein (196 aa).

A disordered region spans residues 44-80; that stretch reads RSVAVPGTEGKKAQNLRQLPAARLTYPTSSSTRPSHA.

This is an uncharacterized protein from Treponema pallidum (strain Nichols).